Here is a 458-residue protein sequence, read N- to C-terminus: Argininosuccinate lyase (458 aa).

It belongs to the lyase 1 family. Argininosuccinate lyase subfamily.

It is found in the cytoplasm. It catalyses the reaction 2-(N(omega)-L-arginino)succinate = fumarate + L-arginine. The protein operates within amino-acid biosynthesis; L-arginine biosynthesis; L-arginine from L-ornithine and carbamoyl phosphate: step 3/3. The polypeptide is Argininosuccinate lyase (Neisseria gonorrhoeae (strain ATCC 700825 / FA 1090)).